Reading from the N-terminus, the 242-residue chain is Probable transcriptional regulatory protein LSL_0422 (242 aa).

The segment at 1-21 (MSGHSKWHNIQGRKNAQDAKR) is disordered.

It belongs to the TACO1 family.

The protein localises to the cytoplasm. In Ligilactobacillus salivarius (strain UCC118) (Lactobacillus salivarius), this protein is Probable transcriptional regulatory protein LSL_0422.